The chain runs to 89 residues: Large ribosomal subunit protein eL34 (89 aa).

Belongs to the eukaryotic ribosomal protein eL34 family.

The sequence is that of Large ribosomal subunit protein eL34 from Methanococcus maripaludis (strain C6 / ATCC BAA-1332).